The sequence spans 267 residues: Thiazole synthase (267 aa).

K101 serves as the catalytic Schiff-base intermediate with DXP. 1-deoxy-D-xylulose 5-phosphate-binding positions include G162, 188-189 (AG), and 210-211 (NT). The tract at residues 247–267 (HASPSSPAAGVPCLPDPEVPV) is disordered.

The protein belongs to the ThiG family. Homotetramer. Forms heterodimers with either ThiH or ThiS.

The protein resides in the cytoplasm. The catalysed reaction is [ThiS sulfur-carrier protein]-C-terminal-Gly-aminoethanethioate + 2-iminoacetate + 1-deoxy-D-xylulose 5-phosphate = [ThiS sulfur-carrier protein]-C-terminal Gly-Gly + 2-[(2R,5Z)-2-carboxy-4-methylthiazol-5(2H)-ylidene]ethyl phosphate + 2 H2O + H(+). The protein operates within cofactor biosynthesis; thiamine diphosphate biosynthesis. Functionally, catalyzes the rearrangement of 1-deoxy-D-xylulose 5-phosphate (DXP) to produce the thiazole phosphate moiety of thiamine. Sulfur is provided by the thiocarboxylate moiety of the carrier protein ThiS. In vitro, sulfur can be provided by H(2)S. The chain is Thiazole synthase from Deinococcus geothermalis (strain DSM 11300 / CIP 105573 / AG-3a).